The chain runs to 81 residues: Beta-catenin-interacting protein 1 (81 aa).

Ser-59 carries the phosphoserine modification.

It belongs to the CTNNBIP1 family. In terms of assembly, binds CTNNB1.

The protein localises to the cytoplasm. It is found in the nucleus. In terms of biological role, prevents the interaction between CTNNB1 and TCF family members, and acts as a negative regulator of the Wnt signaling pathway. This Homo sapiens (Human) protein is Beta-catenin-interacting protein 1 (CTNNBIP1).